Here is a 102-residue protein sequence, read N- to C-terminus: Urease subunit beta (102 aa).

Belongs to the urease beta subunit family. In terms of assembly, heterotrimer of UreA (gamma), UreB (beta) and UreC (alpha) subunits. Three heterotrimers associate to form the active enzyme.

The protein localises to the cytoplasm. The enzyme catalyses urea + 2 H2O + H(+) = hydrogencarbonate + 2 NH4(+). It participates in nitrogen metabolism; urea degradation; CO(2) and NH(3) from urea (urease route): step 1/1. In Pseudomonas savastanoi pv. phaseolicola (strain 1448A / Race 6) (Pseudomonas syringae pv. phaseolicola (strain 1448A / Race 6)), this protein is Urease subunit beta.